We begin with the raw amino-acid sequence, 102 residues long: Protein RnfH (102 aa).

The protein belongs to the UPF0125 (RnfH) family.

The protein is Protein RnfH of Haemophilus influenzae (strain 86-028NP).